The following is a 745-amino-acid chain: Cullin-2 (745 aa).

Residue Lys393 is modified to N6-acetyllysine. Phosphothreonine is present on Thr661. A Cullin neddylation domain is found at 675 to 735 (DRKMYLQAAI…IDKQYIERSQ (61 aa)). Lys689 is covalently cross-linked (Glycyl lysine isopeptide (Lys-Gly) (interchain with G-Cter in NEDD8)).

This sequence belongs to the cullin family. In terms of assembly, component of multiple Cul2-RING (CRL2) E3 ubiquitin-protein ligase complexes consisting of CUL2, Elongin BC (ELOB and ELOC), RBX1 and a variable substrate-specific adapter; this complex is also known as ECS (Elongin BC-CUL2/5-SOCS-box protein) complex and may consist of CUL2 or CUL5. Component of the ECS(VHL) or CBC(VHL) complex containing CUL2, RBX1, ELOB, ELOC and VHL. Component of the ECS(MED8) complex with the probable substrate recognition component MED8. Component of multiple ECS complexes part of the DesCEND (destruction via C-end degrons) pathway, which contain either KLHDC2, KLHDC3, KLHDC10, APPBP2, FEM1A, FEM1B or FEM1C as substrate-recognition component. Component of the ECS(LRR1) complex with the substrate recognition component LRR1. Component of a CRL2(FEM1B) complex containing CUL2, RBX1, ELOB, ELOC and FEM1B. Component of a CRL2(FEM1C) complex containing CUL2, RBX1, ELOB, ELOC and FEM1C. Part of an E3 ubiquitin-protein ligase complex including ZYG11B, CUL2 and Elongin BC. Part of an E3 ubiquitin-protein ligase complex including ZER1, CUL2 and Elongin BC. Interacts with RBX1, RNF7, FEM1B and TIP120A/CAND1. Found in a complex composed of LIMD1, VHL, EGLN1/PHD2, ELOB and CUL2. Interacts (when neddylated) with ARIH1; leading to activate the E3 ligase activity of ARIH1. Interacts (unneddylated form) with DCUN1D1, DCUN1D2, DCUN1D3, DCUN1D4 and DCUN1D5; these interactions promote the cullin neddylation. Component of VCB (elongins BC/CUL2/VHL) complex that contains at least DCUN1D1, CUL2 and VHL; this complex triggers CUL2 neddylation and consequently cullin ring ligase (CRL) substrates polyubiquitylation. Post-translationally, neddylated; which enhances the ubiquitination activity of ECS (Elongin BC-CUL2/5-SOCS-box protein) E3 ubiquitin-protein ligase complexes. Neddylation leads to structural rearrangment in the complex that allows interaction between the E2 ubiquitin-conjugating enzyme and the acceptor ubiquitin. CBC(VHL) complex formation seems to promote neddylation. Deneddylated via its interaction with the COP9 signalosome (CSN) complex.

The protein localises to the nucleus. It functions in the pathway protein modification; protein ubiquitination. In terms of biological role, core component of multiple cullin-RING-based ECS (ElonginB/C-CUL2/5-SOCS-box protein) E3 ubiquitin-protein ligase complexes, which mediate the ubiquitination of target proteins. CUL2 may serve as a rigid scaffold in the complex and may contribute to catalysis through positioning of the substrate and the ubiquitin-conjugating enzyme. The E3 ubiquitin-protein ligase activity of the complex is dependent on the neddylation of the cullin subunit and is inhibited by the association of the deneddylated cullin subunit with TIP120A/CAND1. The functional specificity of the ECS complex depends on the substrate recognition component. ECS(VHL) mediates the ubiquitination of hypoxia-inducible factor (HIF). A number of ECS complexes (containing either KLHDC2, KLHDC3, KLHDC10, APPBP2, FEM1A, FEM1B or FEM1C as substrate-recognition component) are part of the DesCEND (destruction via C-end degrons) pathway, which recognizes a C-degron located at the extreme C terminus of target proteins, leading to their ubiquitination and degradation. ECS complexes and ARIH1 collaborate in tandem to mediate ubiquitination of target proteins. ECS(LRR1) ubiquitinates MCM7 and promotes CMG replisome disassembly by VCP and chromatin extraction during S-phase. This is Cullin-2 (CUL2) from Pongo abelii (Sumatran orangutan).